Reading from the N-terminus, the 143-residue chain is Putative transmembrane protein ORF32 (143 aa).

The next 2 membrane-spanning stretches (helical) occupy residues 20–42 (GISG…SFTL) and 52–74 (WPLI…EGGV).

It localises to the host membrane. The polypeptide is Putative transmembrane protein ORF32 (Haloarcula hispanica (His1V)).